The sequence spans 317 residues: Melanocyte-stimulating hormone receptor (317 aa).

Topologically, residues 1-37 (MPALGSPRRLLGSLNCTPPATLPLTLAPNRTGPQCLE) are extracellular. An N-linked (GlcNAc...) asparagine glycan is attached at Asn-29. A helical membrane pass occupies residues 38–63 (VSIPDGLFLSLGLVSLVENVLVVAAI). The Cytoplasmic segment spans residues 64–72 (AKNRNLHSP). The chain crosses the membrane as a helical span at residues 73–93 (MYYFICCLAMSDLLVSVSNVL). The Extracellular portion of the chain corresponds to 94–118 (ETAVMLLLEAGVLATRAAVVQQLDN). The chain crosses the membrane as a helical span at residues 119 to 140 (VIDVLICSSMVSSLCFLGAIAV). Topologically, residues 141–163 (DRYISIFYALRYHSVVTLPRAWR) are cytoplasmic. The helical transmembrane segment at 164–183 (IIAAIWVASILTSVLSITYY) threads the bilayer. At 184-191 (NHTVVLLC) the chain is on the extracellular side. A helical transmembrane segment spans residues 192–211 (LVGFFIAMLALMAVLYVHML). Over 212–240 (ARACQHARGIARLQKRQRPIHQGFGLKGA) the chain is Cytoplasmic. The helical transmembrane segment at 241–266 (ATLTILLGVFFLCWGPFFLHLSLIVL) threads the bilayer. Residues 267-279 (CPQHPTCGCIFKN) lie on the Extracellular side of the membrane. The chain crosses the membrane as a helical span at residues 280–300 (FNLFLALIICNAIVDPLIYAF). The Cytoplasmic portion of the chain corresponds to 301-317 (RSQELRKTLQEVLQCSW). A lipid anchor (S-palmitoyl cysteine) is attached at Cys-315.

Belongs to the G-protein coupled receptor 1 family. In terms of assembly, interacts with MGRN1, but does not undergo MGRN1-mediated ubiquitination; this interaction competes with GNAS-binding and thus inhibits agonist-induced cAMP production. Interacts with OPN3; the interaction results in a decrease in MC1R-mediated cAMP signaling and ultimately a decrease in melanin production in melanocytes.

It is found in the cell membrane. Functionally, receptor for MSH (alpha, beta and gamma) and ACTH. The activity of this receptor is mediated by G proteins which activate adenylate cyclase. Mediates melanogenesis, the production of eumelanin (black/brown) and phaeomelanin (red/yellow), via regulation of cAMP signaling in melanocytes. This is Melanocyte-stimulating hormone receptor (MC1R) from Capra hircus (Goat).